We begin with the raw amino-acid sequence, 244 residues long: rRNA adenine N-6-methyltransferase (244 aa).

6 residues coordinate S-adenosyl-L-methionine: Asn11, Ile13, Gly38, Glu59, Asp84, and Asn101.

It belongs to the class I-like SAM-binding methyltransferase superfamily. rRNA adenine N(6)-methyltransferase family.

It catalyses the reaction adenosine(2085) in 23S rRNA + 2 S-adenosyl-L-methionine = N(6)-dimethyladenosine(2085) in 23S rRNA + 2 S-adenosyl-L-homocysteine + 2 H(+). Functionally, this protein produces a dimethylation of the adenine residue at position 2085 in 23S rRNA, resulting in reduced affinity between ribosomes and macrolide-lincosamide-streptogramin B antibiotics. This chain is rRNA adenine N-6-methyltransferase (ermC), found in Staphylococcus aureus.